The sequence spans 196 residues: FMN-dependent NADH:quinone oxidoreductase (196 aa).

Ser-10 is a binding site for FMN.

This sequence belongs to the azoreductase type 1 family. In terms of assembly, homodimer. The cofactor is FMN.

The enzyme catalyses 2 a quinone + NADH + H(+) = 2 a 1,4-benzosemiquinone + NAD(+). It carries out the reaction N,N-dimethyl-1,4-phenylenediamine + anthranilate + 2 NAD(+) = 2-(4-dimethylaminophenyl)diazenylbenzoate + 2 NADH + 2 H(+). Its function is as follows. Quinone reductase that provides resistance to thiol-specific stress caused by electrophilic quinones. In terms of biological role, also exhibits azoreductase activity. Catalyzes the reductive cleavage of the azo bond in aromatic azo compounds to the corresponding amines. The chain is FMN-dependent NADH:quinone oxidoreductase from Cereibacter sphaeroides (strain ATCC 17029 / ATH 2.4.9) (Rhodobacter sphaeroides).